The sequence spans 257 residues: MAISKGAINVRSIFIGGEEPCICAPVVGVDAEQVLAETRQISAKKPHLIEWRADFFNGIHDDRQVVATAKEIRTIAGDIPILFTVRSEREGGRPIPLTEEEKMRLFETVCQSGAIDLLDYELVHEPYVATVRQLSRQYGVRLILSYHNFDFTPAKEELVAKMRQAGKYGADIAKVAVMPKSLQDVLVLLQATEEARQELPIPLITMSMGGLGAITRLAGGLFGSAVTFAVGQQSSAPGQIPIEEVKDVLSVIMKYSQ.

Residues glutamate 50–arginine 52 and arginine 86 each bind 3-dehydroquinate. Histidine 147 (proton donor/acceptor) is an active-site residue. Catalysis depends on lysine 174, which acts as the Schiff-base intermediate with substrate. 3-dehydroquinate contacts are provided by arginine 216, serine 235, and glutamine 239.

It belongs to the type-I 3-dehydroquinase family. Homodimer.

The catalysed reaction is 3-dehydroquinate = 3-dehydroshikimate + H2O. It participates in metabolic intermediate biosynthesis; chorismate biosynthesis; chorismate from D-erythrose 4-phosphate and phosphoenolpyruvate: step 3/7. Its function is as follows. Involved in the third step of the chorismate pathway, which leads to the biosynthesis of aromatic amino acids. Catalyzes the cis-dehydration of 3-dehydroquinate (DHQ) and introduces the first double bond of the aromatic ring to yield 3-dehydroshikimate. The sequence is that of 3-dehydroquinate dehydratase from Geobacillus thermodenitrificans (strain NG80-2).